Here is a 171-residue protein sequence, read N- to C-terminus: Ribosome maturation factor RimM (171 aa).

The 73-residue stretch at 97–169 (DGEFYYHEII…RVDVDIMEGL (73 aa)) folds into the PRC barrel domain.

Belongs to the RimM family. Binds ribosomal protein uS19.

The protein localises to the cytoplasm. Its function is as follows. An accessory protein needed during the final step in the assembly of 30S ribosomal subunit, possibly for assembly of the head region. Essential for efficient processing of 16S rRNA. May be needed both before and after RbfA during the maturation of 16S rRNA. It has affinity for free ribosomal 30S subunits but not for 70S ribosomes. The protein is Ribosome maturation factor RimM of Lactococcus lactis subsp. cremoris (strain SK11).